Consider the following 1456-residue polypeptide: Leucine-rich repeat-containing protein 9 (1456 aa).

LRR repeat units lie at residues 53–78 (FHNLSSLTIVAQDIREISGLETCLQL), 97–119 (CRNLEKLYLYYNKISKIENLEKL), 120–141 (IKLEVLWLNHNMIKNIEGLQTL), 142–164 (KNLKDLNLAGNLVSSIGRCLDPN), 166–188 (QLEKLNLSGNQITSFKDLTNLTK), 190–212 (TRLKDLCLNDPQYKSNPVCQLCN), 224–248 (LQRLDTFDVSAKQIKELADSTAMKK), and 264–287 (NEELEKLNDRKCKLQKLPEERIKL). Residues 305–325 (SSKGQSDTTPEAEKPRNSEVV) are disordered. The LRR 9 repeat unit spans residues 339 to 362 (LSALDDRVTFWNKKLHEIEAIYRT). Y525 bears the Phosphotyrosine mark. 23 LRR repeats span residues 661-683 (KPRPKLISLDEKTIISLAKTNIY), 684-705 (SHIVNLNLHGNSLSKLRDLAKL), 706-727 (TGLRKLNISFNEFTCLDDVYHL), 729-748 (NLEYLDASHNHVITLEGFRG), 749-772 (LMKLKHLDLSWNQLKKTGEEINVL), 776-802 (TTSLLTLDIQHNPWQKPATLRLSVIGR), 806-833 (LTHLDGLVISEEETRAALKFISGTKITQ), 876-898 (YSKITALNLDGQHLFEITNLEKL), 899-920 (ENLKWASFSNNNLSKMEGLESC), 921-942 (VNLEELTLDGNCISKIEGITRL), 943-965 (TKLSRLSMNNNLLTGLEKHTFDN), 967-991 (LHLHSLSLENNRITSLSALQKTFTL), 993-1010 (ELYISNNYIAVNQEIYNL), 1013-1037 (LCNLVILDMYGNIIIWNQENYRFFV), 1082-1105 (FIQMQELNWTSSAIRTVDLIPVDH), 1106-1128 (FRNVSNVNLQNNNLTSFSGLIYL), 1129-1151 (PNVKVLCLNYNHIESIMPRLKPQ), 1191-1214 (MQSLEVLHLGYNGICNLVQLQLNR), 1215-1237 (LRNLKFLFLQGNEISQVEGLDNL), 1238-1260 (IVLQELVVDHNRIRAFNDTAFSK), 1262-1283 (SSLLMLHLEENRLRELSKLQSL), 1284-1307 (VKLEKLFLGYNKIQDITELEKLDV), and 1309-1335 (PSLRELTVYGNPICRKMVHRHVLIFRL).

This chain is Leucine-rich repeat-containing protein 9 (Lrrc9), found in Mus musculus (Mouse).